Here is a 58-residue protein sequence, read N- to C-terminus: UPF0434 protein Daro_3207 (58 aa).

The protein belongs to the UPF0434 family.

This chain is UPF0434 protein Daro_3207, found in Dechloromonas aromatica (strain RCB).